We begin with the raw amino-acid sequence, 268 residues long: Helix-loop-helix protein 6 (268 aa).

Residues 117 to 130 (QSQVQPQLPTQSQP) show a composition bias toward low complexity. A disordered region spans residues 117–140 (QSQVQPQLPTQSQPKPSSKASLDT). Residues 131–140 (KPSSKASLDT) show a composition bias toward polar residues. Residues 173 to 225 (SSVWKRNERERCRVRNVNDGYERLRKHLPVHFDEKRISKVDTLRLAIRYIKHL) enclose the bHLH domain.

Expressed in the gland cells of the pharynx and weakly in the pharyngeal neuron.

It localises to the nucleus. Transcription factor that regulates the development of the g2 pharyngeal gland cells and pharyngeal gland function and thereby is required for feeding. Required for the expression of a number of genes in the pharyngeal gland, possibly by binding to the E box motif (5'-CANNTG-3') in the promoter region of these genes. Positively regulates the expression of genes encoding mucin-like proteins, which lubricate the pharyngeal tract to ensure efficient passage of the bacterial food source. Exhibits pharyngeal gland-specific positive autoregulation activity. The polypeptide is Helix-loop-helix protein 6 (hlh-6) (Caenorhabditis elegans).